Consider the following 469-residue polypeptide: Glutamate--tRNA ligase (469 aa).

A 'HIGH' region motif is present at residues 11–21; it reads PSPTGFIHLGN. Residues 243-247 carry the 'KMSKS' region motif; that stretch reads KMSKR. Residue Lys246 coordinates ATP.

Belongs to the class-I aminoacyl-tRNA synthetase family. Glutamate--tRNA ligase type 1 subfamily. As to quaternary structure, monomer.

The protein localises to the cytoplasm. The catalysed reaction is tRNA(Glu) + L-glutamate + ATP = L-glutamyl-tRNA(Glu) + AMP + diphosphate. Its function is as follows. Catalyzes the attachment of glutamate to tRNA(Glu) in a two-step reaction: glutamate is first activated by ATP to form Glu-AMP and then transferred to the acceptor end of tRNA(Glu). The protein is Glutamate--tRNA ligase of Burkholderia lata (strain ATCC 17760 / DSM 23089 / LMG 22485 / NCIMB 9086 / R18194 / 383).